Reading from the N-terminus, the 33-residue chain is Kappa-theraphotoxin-Pg2a (33 aa).

3 cysteine pairs are disulfide-bonded: Cys-2/Cys-16, Cys-9/Cys-21, and Cys-15/Cys-28.

Expressed by the venom gland.

The protein localises to the secreted. Functionally, gating modifier of Kv2.1/KCNB1 channels. This is Kappa-theraphotoxin-Pg2a from Chilobrachys guangxiensis (Chinese earth tiger tarantula).